The chain runs to 252 residues: Thiazole synthase (252 aa).

Residue Lys98 is the Schiff-base intermediate with DXP of the active site. Residues Gly159, 185-186 (AG), and 207-208 (AT) each bind 1-deoxy-D-xylulose 5-phosphate.

It belongs to the ThiG family. As to quaternary structure, homotetramer. Forms heterodimers with either ThiH or ThiS.

It localises to the cytoplasm. The enzyme catalyses [ThiS sulfur-carrier protein]-C-terminal-Gly-aminoethanethioate + 2-iminoacetate + 1-deoxy-D-xylulose 5-phosphate = [ThiS sulfur-carrier protein]-C-terminal Gly-Gly + 2-[(2R,5Z)-2-carboxy-4-methylthiazol-5(2H)-ylidene]ethyl phosphate + 2 H2O + H(+). It participates in cofactor biosynthesis; thiamine diphosphate biosynthesis. Catalyzes the rearrangement of 1-deoxy-D-xylulose 5-phosphate (DXP) to produce the thiazole phosphate moiety of thiamine. Sulfur is provided by the thiocarboxylate moiety of the carrier protein ThiS. In vitro, sulfur can be provided by H(2)S. This is Thiazole synthase from Mycolicibacterium smegmatis (strain ATCC 700084 / mc(2)155) (Mycobacterium smegmatis).